The primary structure comprises 261 residues: Gap junction beta-6 protein (261 aa).

The Cytoplasmic portion of the chain corresponds to 1–22 (MDWGTLHTFIGGVNKHSTSIGK). Residues 23-45 (VWITVIFIFRVMILVVAAQEVWG) traverse the membrane as a helical segment. The Extracellular segment spans residues 46 to 75 (DEQEDFVCNTLQPGCKNVCYDHFFPVSHIR). A helical transmembrane segment spans residues 76-98 (LWALQLIFVSTPALLVAMHVAYY). Topologically, residues 99-131 (RHETTRKFRRGEKRNDFKDIEDIKKQKVRIEGS) are cytoplasmic. The helical transmembrane segment at 132–154 (LWWTYTSSIFFRIIFEAAFMYVF) threads the bilayer. The Extracellular portion of the chain corresponds to 155–192 (YFLYNGYHLPWVLKCGIDPCPNLVDCFISRPTEKTVFT). Residues 193 to 215 (IFMISASVICMLLNVAELCYLLL) form a helical membrane-spanning segment. The Cytoplasmic segment spans residues 216–261 (KVCFRRSKRAQTQKNHPNHALKESKQNEMNELISDSGQNAITGFPS).

The protein belongs to the connexin family. Beta-type (group I) subfamily. In terms of assembly, a connexon is composed of a hexamer of connexins. Interacts with CNST.

Its subcellular location is the cell membrane. It is found in the cell junction. It localises to the gap junction. Its function is as follows. One gap junction consists of a cluster of closely packed pairs of transmembrane channels, the connexons, through which materials of low MW diffuse from one cell to a neighboring cell. This Homo sapiens (Human) protein is Gap junction beta-6 protein (GJB6).